Consider the following 315-residue polypeptide: Ribose-phosphate pyrophosphokinase (315 aa).

Residues 40 to 42 (DGE) and 99 to 100 (RQ) each bind ATP. The Mg(2+) site is built by His-133 and Asp-175. Lys-198 is a catalytic residue. D-ribose 5-phosphate-binding positions include Arg-200, Asp-224, and 228–232 (DTAHS).

It belongs to the ribose-phosphate pyrophosphokinase family. Class I subfamily. Homohexamer. The cofactor is Mg(2+).

The protein resides in the cytoplasm. It catalyses the reaction D-ribose 5-phosphate + ATP = 5-phospho-alpha-D-ribose 1-diphosphate + AMP + H(+). It functions in the pathway metabolic intermediate biosynthesis; 5-phospho-alpha-D-ribose 1-diphosphate biosynthesis; 5-phospho-alpha-D-ribose 1-diphosphate from D-ribose 5-phosphate (route I): step 1/1. In terms of biological role, involved in the biosynthesis of the central metabolite phospho-alpha-D-ribosyl-1-pyrophosphate (PRPP) via the transfer of pyrophosphoryl group from ATP to 1-hydroxyl of ribose-5-phosphate (Rib-5-P). This Thermotoga maritima (strain ATCC 43589 / DSM 3109 / JCM 10099 / NBRC 100826 / MSB8) protein is Ribose-phosphate pyrophosphokinase.